Consider the following 247-residue polypeptide: Cell division protein ZapD (247 aa).

This sequence belongs to the ZapD family. Interacts with FtsZ.

It localises to the cytoplasm. Cell division factor that enhances FtsZ-ring assembly. Directly interacts with FtsZ and promotes bundling of FtsZ protofilaments, with a reduction in FtsZ GTPase activity. In Shigella boydii serotype 18 (strain CDC 3083-94 / BS512), this protein is Cell division protein ZapD.